The following is a 296-amino-acid chain: MQDRFIRSITQLPTPLADALIPLLHQNFAGHIDAQQLAELVQSSKMTEAEVLLALLPIAAALAKPPISEFYVGAIAKGKSGDIYMGANLELPGEALFHSVHAEQSAISHAWLSGESQIVDMIVNASPCGHCRQFMNELVEGGQIKIHLPSQDSHLLSYYLPYAFGPKDLNVQSPLLVKHETEFALDSSDPMVIEALDHAGLSYAPYTQSYAAVVLETSDGATYCGRYAENAAFNPSMLPMQMALSNLTRHNRDFGEIRRAVLVESSQGKISLVGATMDALHAVAAIELEHIVVDPV.

2 consecutive CMP/dCMP-type deaminase domains span residues T47–K167 and D186–V296. N88–E90 is a binding site for substrate. H101 lines the Zn(2+) pocket. The active-site Proton donor is E103. Residues C128 and C131 each coordinate Zn(2+).

Belongs to the cytidine and deoxycytidylate deaminase family. Homodimer. Zn(2+) serves as cofactor.

It carries out the reaction cytidine + H2O + H(+) = uridine + NH4(+). The enzyme catalyses 2'-deoxycytidine + H2O + H(+) = 2'-deoxyuridine + NH4(+). Functionally, this enzyme scavenges exogenous and endogenous cytidine and 2'-deoxycytidine for UMP synthesis. This Shewanella sp. (strain MR-4) protein is Cytidine deaminase.